We begin with the raw amino-acid sequence, 839 residues long: LPS-assembly protein LptD (839 aa).

An N-terminal signal peptide occupies residues 1 to 21 (MAIGITACVLSLINYQGLAYS).

This sequence belongs to the LptD family. In terms of assembly, component of the lipopolysaccharide transport and assembly complex. Interacts with LptE and LptA.

It is found in the cell outer membrane. Its function is as follows. Together with LptE, is involved in the assembly of lipopolysaccharide (LPS) at the surface of the outer membrane. The protein is LPS-assembly protein LptD of Legionella pneumophila subsp. pneumophila (strain Philadelphia 1 / ATCC 33152 / DSM 7513).